Consider the following 106-residue polypeptide: Heat shock protein HspQ (106 aa).

Residues 80 to 106 (DEHLDNDSMDELSQSIRNQLQAPRLRN) are disordered. The segment covering 90–100 (ELSQSIRNQLQ) has biased composition (polar residues).

This sequence belongs to the HspQ family.

The protein resides in the cytoplasm. In terms of biological role, involved in the degradation of certain denaturated proteins, including DnaA, during heat shock stress. The chain is Heat shock protein HspQ from Proteus mirabilis (strain HI4320).